The primary structure comprises 532 residues: MKFDPEQVKLETKEDFDRAWSTSGKYVAQPDSTKDYTIHNEPGKAHPVYDTLNKLREAYINLGFEEMVNPIIIEESDIFRQFNYEALAVLDRVYYIGGLPRPNVGISDERFAQIEQIFGRSLTDSDKETIREILHKYKKGEIEGDDLVADLSAGLQIQDSKVAVMIDHVFPEFKKLEPVCSRKTLRSHMTSGWFITLGAMVDRRTTPLKLFSVDLVFRREQEENADRLRAYHSASCVIMDPDVTVEHGKAVAAGLLRQFGFSQFKFKPDDKRSKYYTPDTQIEVYGYHPALKGSNTKYKDGWVEIATFGIYSATALSQYDIPYPVMNLGLGVERLAMILHQAKDMRDMVYPQFKEEWDLTDAEIARMISMEKHPQTKEGHDIAMAIIATVERNGSAPSPCRFDVWEGTINGKKIKVYLEEKEEGKKLCGGAIMNEAYVYKGDLLGIPLNNPKFAEVAEKGAPTGIRNIDAIANAAARNIEEGVYETTVKMSRAPGDVYVKVDPVALRYIQGKKHKIDFRGPVFTSIKAELIE.

Residues 188-190, 233-235, 275-276, and N327 contribute to the substrate site; these read HMT, SAS, and YY.

Belongs to the class-II aminoacyl-tRNA synthetase family. O-phosphoseryl-tRNA(Cys) synthetase subfamily. Homotetramer. Interacts with SepCysS.

It catalyses the reaction tRNA(Cys) + O-phospho-L-serine + ATP = O-phospho-L-seryl-tRNA(Cys) + AMP + diphosphate. Its function is as follows. Catalyzes the attachment of O-phosphoserine (Sep) to tRNA(Cys). This is O-phosphoserine--tRNA(Cys) ligase from Methanocella arvoryzae (strain DSM 22066 / NBRC 105507 / MRE50).